The primary structure comprises 325 residues: Glutarate 2-hydroxylase (325 aa).

Residues H160, D162, and H292 each coordinate Fe cation.

Belongs to the glutarate hydroxylase family. Homotetramer. Fe(2+) is required as a cofactor.

The enzyme catalyses glutarate + 2-oxoglutarate + O2 = (S)-2-hydroxyglutarate + succinate + CO2. Its pathway is amino-acid degradation. Its function is as follows. Acts as an alpha-ketoglutarate-dependent dioxygenase catalyzing hydroxylation of glutarate (GA) to L-2-hydroxyglutarate (L2HG). Functions in a L-lysine degradation pathway that proceeds via cadaverine, glutarate and L-2-hydroxyglutarate. The sequence is that of Glutarate 2-hydroxylase from Pseudomonas putida (strain GB-1).